A 128-amino-acid chain; its full sequence is UPF0292 protein MJ1624 (128 aa).

The Toprim domain maps to Glu23–Ile105. Positions 29, 74, and 76 each coordinate Mg(2+).

Belongs to the UPF0292 family. Mg(2+) is required as a cofactor.

This chain is UPF0292 protein MJ1624, found in Methanocaldococcus jannaschii (strain ATCC 43067 / DSM 2661 / JAL-1 / JCM 10045 / NBRC 100440) (Methanococcus jannaschii).